The following is a 1148-amino-acid chain: Replication factor C subunit 1 (1148 aa).

Positions 46-56 are enriched in basic and acidic residues; that stretch reads NSSRKEDDFKQ. Disordered regions lie at residues 46-201 and 228-380; these read NSSR…LNDE and TLAM…TNYQ. Lys50 is covalently cross-linked (Glycyl lysine isopeptide (Lys-Gly) (interchain with G-Cter in SUMO2)). Tyr67 is modified (phosphotyrosine). Phosphoserine is present on residues Ser69, Ser71, Ser73, and Ser108. The residue at position 110 (Thr110) is a Phosphothreonine. Positions 130–141 are enriched in polar residues; it reads RSTNSHLGTSNM. Ser156 bears the Phosphoserine mark. Thr161 and Thr163 each carry phosphothreonine. Ser164, Ser173, and Ser190 each carry phosphoserine. The segment covering 234 to 246 has biased composition (basic and acidic residues); the sequence is EEPKTKKARKDTE. Ser253 bears the Phosphoserine mark. The span at 262–271 shows a compositional bias: basic residues; it reads EKHKYPHKVK. Phosphoserine is present on residues Ser281 and Ser283. A compositionally biased stretch (basic and acidic residues) spans 288 to 308; sequence SKYESSKESQQHSKSSADKIG. Position 312 is a phosphoserine (Ser312). 2 stretches are compositionally biased toward basic and acidic residues: residues 323–353 and 362–376; these read KRKE…ETKT and AKKE…EKKR. Ser368 is modified (phosphoserine). Residues 402 to 492 enclose the BRCT domain; the sequence is GAENCLEGLI…PGKKSKYEIA (91 aa). Composition is skewed to basic and acidic residues over residues 496–507 and 520–538; these read EMKKESKLERTP and SKKE…RDSL. The tract at residues 496–538 is disordered; sequence EMKKESKLERTPQKNVQGKRKISPSKKESESKKSRPTSKRDSL. Position 537 is a phosphoserine (Ser537). 650–657 provides a ligand contact to ATP; that stretch reads SGPPGVGK. Positions 1081-1148 are disordered; the sequence is KASRHSTSPS…RKGKGKSSKK (68 aa). Positions 1094 to 1105 are enriched in acidic residues; that stretch reads EYNEELNEDDSQ. Ser1104 and Ser1106 each carry phosphoserine. The Nuclear localization signal motif lies at 1120-1124; sequence IKKKT. Residues 1130-1140 are compositionally biased toward basic and acidic residues; the sequence is SKPEKDKEPRK.

It belongs to the activator 1 large subunit family. Large subunit of the RFC complex, an heteropentameric complex consisting of RFC1 and four small subunits RFC2, RFC3, RFC4 and RFC5; the RFC complex interacts with PCNA and the interaction involves RFC1. Wide tissue distribution. Undetectable in placental tissue.

It localises to the nucleus. In terms of biological role, subunit of the replication factor C (RFC) complex which acts during elongation of primed DNA templates by DNA polymerases delta and epsilon, and is necessary for ATP-dependent loading of proliferating cell nuclear antigen (PCNA) onto primed DNA. This subunit binds to the primer-template junction. Binds the PO-B transcription element as well as other GA rich DNA sequences. Can bind single- or double-stranded DNA. The protein is Replication factor C subunit 1 (RFC1) of Homo sapiens (Human).